The primary structure comprises 303 residues: DnaJ homolog subfamily C member 17 (303 aa).

In terms of domain architecture, J spans 11–76 (DLYALLGIEE…AARAAYDKVR (66 aa)). Disordered stretches follow at residues 104-123 (ERQA…SATT) and 150-170 (IRQD…GKGT). Position 112 is a phosphoserine (Ser112). Over residues 150–166 (IRQDREQRLRGRTENTE) the composition is skewed to basic and acidic residues. The region spanning 178–249 (KCKKEDESQG…NPLKVSWLEG (72 aa)) is the RRM domain. Lys264 carries the post-translational modification N6-methyllysine.

Expressed in the thyroid gland.

It localises to the cytoplasm. The protein localises to the nucleus. Functionally, may negatively affect PAX8-induced thyroglobulin/TG transcription. This chain is DnaJ homolog subfamily C member 17 (Dnajc17), found in Mus musculus (Mouse).